We begin with the raw amino-acid sequence, 382 residues long: Mannitol-1-phosphate 5-dehydrogenase (382 aa).

Residue 4–15 participates in NAD(+) binding; sequence AVHFGAGNIGRG.

The protein belongs to the mannitol dehydrogenase family.

The catalysed reaction is D-mannitol 1-phosphate + NAD(+) = beta-D-fructose 6-phosphate + NADH + H(+). The protein is Mannitol-1-phosphate 5-dehydrogenase of Vibrio campbellii (strain ATCC BAA-1116).